The chain runs to 874 residues: Alanine--tRNA ligase (874 aa).

4 residues coordinate Zn(2+): histidine 562, histidine 566, cysteine 664, and histidine 668.

Belongs to the class-II aminoacyl-tRNA synthetase family. The cofactor is Zn(2+).

It localises to the cytoplasm. It carries out the reaction tRNA(Ala) + L-alanine + ATP = L-alanyl-tRNA(Ala) + AMP + diphosphate. Catalyzes the attachment of alanine to tRNA(Ala) in a two-step reaction: alanine is first activated by ATP to form Ala-AMP and then transferred to the acceptor end of tRNA(Ala). Also edits incorrectly charged Ser-tRNA(Ala) and Gly-tRNA(Ala) via its editing domain. The chain is Alanine--tRNA ligase from Neisseria meningitidis serogroup C (strain 053442).